The chain runs to 236 residues: Orotidine 5'-phosphate decarboxylase (236 aa).

Residues Asp17, Lys39, 66 to 75 (DLKFHDIPNT), Thr125, Arg186, Gln195, Gly215, and Arg216 each bind substrate. The Proton donor role is filled by Lys68.

The protein belongs to the OMP decarboxylase family. Type 1 subfamily. As to quaternary structure, homodimer.

The enzyme catalyses orotidine 5'-phosphate + H(+) = UMP + CO2. It participates in pyrimidine metabolism; UMP biosynthesis via de novo pathway; UMP from orotate: step 2/2. Its function is as follows. Catalyzes the decarboxylation of orotidine 5'-monophosphate (OMP) to uridine 5'-monophosphate (UMP). The sequence is that of Orotidine 5'-phosphate decarboxylase from Buchnera aphidicola subsp. Schizaphis graminum (strain Sg).